The following is a 468-amino-acid chain: Effector protein hopD2 (468 aa).

Residues 1-20 (MNPLQPIQHSITNSQMSGGQ) are compositionally biased toward polar residues. Residues 1-35 (MNPLQPIQHSITNSQMSGGQQLEAEGSQAHNSYSH) form a disordered region. Positions 143-468 (DASSPPSAND…TQWRAKIALE (326 aa)) constitute a Tyrosine-protein phosphatase domain. Cysteine 378 acts as the Phosphocysteine intermediate in catalysis.

As to quaternary structure, interacts with EFR and FLS2 (via the kinase and cytoplasmic domains).

The protein localises to the secreted. It carries out the reaction O-phospho-L-tyrosyl-[protein] + H2O = L-tyrosyl-[protein] + phosphate. Inhibited by sodium orthovanadate. Its function is as follows. Effector showing tyrosine-phosphatase activity required for host defense suppression. Functions inside plant cells causing suppression of HR (hypersensitive response), PR1 gene expression and oxidative burst probably by interfering with a MAPK (mitogen-activated protein kinase) pathway. MAPK cascades are known to activate defense-related transcription factors. Inhibits plant pattern-recognition receptors (PRRs) activation. This chain is Effector protein hopD2 (hopD2), found in Pseudomonas syringae pv. tomato (strain ATCC BAA-871 / DC3000).